The chain runs to 321 residues: Nucleus-vacuole junction protein 1 (321 aa).

An N-terminal signal peptide occupies residues methionine 1–glycine 22. The tract at residues glutamate 73–asparagine 125 is TSC13-binding. A helical transmembrane segment spans residues isoleucine 94–glycine 114. The OSH1-binding stretch occupies residues lysine 139–serine 195. Serine 156 is modified (phosphoserine). Residues glutamate 174–asparagine 183 are compositionally biased toward basic and acidic residues. Positions glutamate 174–leucine 194 are disordered. Residues serine 184–leucine 194 are compositionally biased toward polar residues. Residue serine 199 is modified to Phosphoserine. Residues glutamine 210 to isoleucine 275 form a disordered region. Residues aspartate 233–tyrosine 321 are VAC8-binding. The span at serine 242–arginine 262 shows a compositional bias: basic and acidic residues. A compositionally biased stretch (low complexity) spans threonine 263 to serine 272. Phosphoserine is present on residues serine 285 and serine 298. The interval proline 299–tyrosine 321 is disordered.

As to quaternary structure, interacts with OSH1, TSC13 and VAC8.

It is found in the nucleus outer membrane. Functionally, involved in the formation of nucleus-vacuole (NV) junctions during piecemeal microautophagy of the nucleus (PMN). NV junctions are interorganelle interfaces mediated by NVJ1 in the nuclear envelope and VAC8 on the vacuole membrane. Together, NVJ1 and VAC8 form Velcro-like patches through which teardrop-like portions of the nucleus are pinched off into the vacuolar lumen and degraded by the PMN process. Also acts as an outer-nuclear membrane receptor for OSH1 and TSC13. The protein is Nucleus-vacuole junction protein 1 (NVJ1) of Saccharomyces cerevisiae (strain YJM789) (Baker's yeast).